The sequence spans 377 residues: Molybdenum import ATP-binding protein ModC (377 aa).

The ABC transporter domain occupies 4 to 240; that stretch reads IAPRSIRGEF…PALPLATARD (237 aa). 38-45 serves as a coordination point for ATP; it reads GPSGCGKS. Residues 299–369 form the Mop domain; the sequence is RTSILNILPA…IKGVALAPER (71 aa).

It belongs to the ABC transporter superfamily. Molybdate importer (TC 3.A.1.8) family. As to quaternary structure, the complex is composed of two ATP-binding proteins (ModC), two transmembrane proteins (ModB) and a solute-binding protein (ModA).

Its subcellular location is the cell inner membrane. The enzyme catalyses molybdate(out) + ATP + H2O = molybdate(in) + ADP + phosphate + H(+). Its function is as follows. Part of the ABC transporter complex ModABC involved in molybdenum import. Responsible for energy coupling to the transport system. This Rhodopseudomonas palustris (strain HaA2) protein is Molybdenum import ATP-binding protein ModC.